Consider the following 129-residue polypeptide: Protein Wnt-6 (129 aa).

5 disulfide bridges follow: cysteine 3-cysteine 17, cysteine 5-cysteine 12, cysteine 75-cysteine 106, cysteine 91-cysteine 101, and cysteine 128-cysteine 129. A lipid anchor (O-palmitoleoyl serine; by PORCN) is attached at serine 9. N-linked (GlcNAc...) asparagine glycosylation is present at asparagine 92.

The protein belongs to the Wnt family. Palmitoleoylation is required for efficient binding to frizzled receptors. Depalmitoleoylation leads to Wnt signaling pathway inhibition. At tailbud: dorsal, punctate; in adult: brain and heart.

The protein resides in the secreted. It is found in the extracellular space. The protein localises to the extracellular matrix. Its function is as follows. Ligand for members of the frizzled family of seven transmembrane receptors. Probable developmental protein. May be a signaling molecule which affects the development of discrete regions of tissues. Is likely to signal over only few cell diameters. In Xenopus laevis (African clawed frog), this protein is Protein Wnt-6 (wnt6).